Here is a 573-residue protein sequence, read N- to C-terminus: Sulfate adenylyltransferase (573 aa).

Residues 1-169 are N-terminal; it reads MSNPPHGGVL…LEAVNKLQHY (169 aa). The tract at residues 170 to 394 is catalytic; the sequence is DFVDLRYSPA…LRESHPPRSQ (225 aa). Gln197 serves as a coordination point for sulfate. ATP-binding positions include 197–200 and 291–294; these read QTRN and GRDH. Residues Thr198, Arg199, and Asn200 contribute to the active site. Arg199 lines the sulfate pocket. Ala295 contributes to the sulfate binding site. Met333 lines the ATP pocket. The allosteric regulation domain; adenylyl-sulfate kinase-like stretch occupies residues 395-573; the sequence is QGFTVLFTGY…LESQGLLDRF (179 aa). Residues 434–437, Arg451, 477–478, and Arg515 contribute to the 3'-phosphoadenylyl sulfate site; these read ENIR and IA.

It in the N-terminal section; belongs to the sulfate adenylyltransferase family. The protein in the C-terminal section; belongs to the APS kinase family. In terms of assembly, homohexamer. Dimer of trimers.

The protein resides in the cytoplasm. The enzyme catalyses sulfate + ATP + H(+) = adenosine 5'-phosphosulfate + diphosphate. Its pathway is sulfur metabolism; hydrogen sulfide biosynthesis; sulfite from sulfate: step 1/3. With respect to regulation, allosterically inhibited by 3'-phosphoadenosine 5'-phosphosulfate (PAPS). Functionally, catalyzes the first intracellular reaction of sulfate assimilation, forming adenosine-5'-phosphosulfate (APS) from inorganic sulfate and ATP. Plays an important role in sulfate activation as a component of the biosynthesis pathway of sulfur-containing amino acids. The chain is Sulfate adenylyltransferase (cys-11) from Neurospora crassa (strain ATCC 24698 / 74-OR23-1A / CBS 708.71 / DSM 1257 / FGSC 987).